The sequence spans 200 residues: 3-isopropylmalate dehydratase small subunit (200 aa).

Belongs to the LeuD family. LeuD type 1 subfamily. In terms of assembly, heterodimer of LeuC and LeuD.

It carries out the reaction (2R,3S)-3-isopropylmalate = (2S)-2-isopropylmalate. It participates in amino-acid biosynthesis; L-leucine biosynthesis; L-leucine from 3-methyl-2-oxobutanoate: step 2/4. Functionally, catalyzes the isomerization between 2-isopropylmalate and 3-isopropylmalate, via the formation of 2-isopropylmaleate. In Yersinia pseudotuberculosis serotype I (strain IP32953), this protein is 3-isopropylmalate dehydratase small subunit.